The chain runs to 227 residues: Cytidylate kinase (227 aa).

Residue 12 to 20 (GPGGAGKGT) participates in ATP binding.

Belongs to the cytidylate kinase family. Type 1 subfamily.

It localises to the cytoplasm. It catalyses the reaction CMP + ATP = CDP + ADP. The enzyme catalyses dCMP + ATP = dCDP + ADP. The protein is Cytidylate kinase of Klebsiella pneumoniae (strain 342).